We begin with the raw amino-acid sequence, 918 residues long: Exostosin-like 3 (918 aa).

The Cytoplasmic segment spans residues 1–30 (MTGYTMLRNGGVGNGGQTCMLRWSNRIRLT). Residues 1 to 140 (MTGYTMLRNG…LKNVISQTEH (140 aa)) are required for interaction with REG3A. The helical; Signal-anchor for type II membrane protein transmembrane segment at 31–51 (WLSFTLFIILVFFPLIAHYYL) threads the bilayer. The Lumenal segment spans residues 52–918 (TTLDEADEAG…HDKTKCFKFI (867 aa)). Intrachain disulfides connect cysteine 177–cysteine 182 and cysteine 188–cysteine 236. An N-linked (GlcNAc...) asparagine glycan is attached at asparagine 290. A Phosphoserine modification is found at serine 361. Residues cysteine 399 and cysteine 414 are joined by a disulfide bond. Residue asparagine 591 is glycosylated (N-linked (GlcNAc...) asparagine). Residues leucine 667, arginine 671, asparagine 696, asparagine 722, arginine 727, aspartate 743, aspartate 744, and aspartate 745 each contribute to the UDP-N-acetyl-alpha-D-glucosamine site. Aspartate 745 contacts Mn(2+). N-linked (GlcNAc...) asparagine glycosylation occurs at asparagine 789. A disulfide bond links cysteine 830 and cysteine 878. Residues glutamate 831, aspartate 832, and arginine 875 each coordinate UDP-N-acetyl-alpha-D-glucosamine. Aspartate 832 is an active-site residue.

This sequence belongs to the glycosyltransferase 47 family. As to quaternary structure, homodimer; disulfide-linked. Interacts with REG3A. The cofactor is Mn(2+). Expressed in pancreatic islet beta-cells. Expressed in lung epithelial cells. Expressed in microglia.

It localises to the endoplasmic reticulum membrane. It is found in the golgi apparatus. The protein localises to the cell membrane. The protein resides in the nucleus. It catalyses the reaction 3-O-(beta-D-GlcA-(1-&gt;3)-beta-D-Gal-(1-&gt;3)-beta-D-Gal-(1-&gt;4)-beta-D-Xyl)-L-seryl-[protein] + UDP-N-acetyl-alpha-D-glucosamine = 3-O-(alpha-D-GlcNAc-(1-&gt;4)-beta-D-GlcA-(1-&gt;3)-beta-D-Gal-(1-&gt;3)-beta-D-Gal-(1-&gt;4)-beta-D-Xyl)-L-seryl-[protein] + UDP + H(+). Its pathway is glycan metabolism; heparan sulfate biosynthesis. Its function is as follows. Glycosyltransferase which regulates the biosynthesis of heparan sulfate (HS). Initiates HS synthesis by transferring the first N-acetyl-alpha-D-glucosamine (alpha-GlcNAc) residue (GlcNAcT-I activity) to the tetrasaccharide linker (GlcA-Gal-Gal-Xyl-)Ser core linker. May also transfer alpha-GlcNAc residues during HS elongation (GlcNAcT-II activity). Lacks glucuronyl transferase II (GlcAT-II) activity. Important for both skeletal development and hematopoiesis, through the formation of HS proteoglycans (HSPGs). Through the synthesis of HS, regulates postnatal pancreatic islet maturation and insulin secretion. Functionally, receptor for REG3A, REG3B and REG3G, induces the activation of downstream signaling pathways such as PI3K-AKT or RAS-RAF-MEK-ERK signaling pathway. Required for the function of REG3A in regulating keratinocyte proliferation and differentiation. Required for the inhibition of skin inflammation mediated by REG3A through the activation of PI3K-AKT-STAT3 pathway. Required for the function of REG3A and REG3G in glucose tolerance in pancreas. Expressed in microglia, is activated by nociceptor-derived REG3G in response to endotoxins, leading to the inhibition of kynurenine pathway to prevent endotoxic death. In Mus musculus (Mouse), this protein is Exostosin-like 3.